We begin with the raw amino-acid sequence, 101 residues long: Large ribosomal subunit protein bL21 (101 aa).

It belongs to the bacterial ribosomal protein bL21 family. Part of the 50S ribosomal subunit. Contacts protein L20.

This protein binds to 23S rRNA in the presence of protein L20. The chain is Large ribosomal subunit protein bL21 from Corynebacterium glutamicum (strain R).